The chain runs to 450 residues: Vimentin beta (450 aa).

Residues 1 to 81 (MSSRTSTSSY…FGLADAINTE (81 aa)) form a head region. Residues 24–38 (STYSSRQYSSPGRTT) are compositionally biased toward polar residues. The tract at residues 24–56 (STYSSRQYSSPGRTTSRVSYSSASSTSPSLYMS) is disordered. Residues 39-56 (SRVSYSSASSTSPSLYMS) show a composition bias toward low complexity. The interval 82–117 (FKANRTNEKAEMQHVNDRFASYIEEVRFLEQQNKIL) is coil 1A. The IF rod domain occupies 89–397 (EKAEMQHVND…NLLEGEEYRI (309 aa)). The linker 1 stretch occupies residues 118–139 (TAELEQMRGKGSSRVGDLYEDE). Residues 140 to 231 (MRELRRQVDQ…KLHDEELAEL (92 aa)) form a coil 1B region. The segment at 232–254 (QMQIQERHVQIDMEVAKPDLTAA) is linker 12. Residues 255–393 (LRDVRQQYET…ATYRNLLEGE (139 aa)) form a coil 2 region. Positions 394 to 450 (EYRITTPFPNLSSLSLRESMKEIRPAMDSLSKKVVIKTIETRDGHIINQSTQKDNLE) are tail.

It belongs to the intermediate filament family. In terms of assembly, homomer. One of the most prominent phosphoproteins in various cells of mesenchymal origin. Phosphorylation is enhanced during cell division, at which time vimentin filaments are significantly reorganized. In terms of tissue distribution, expressed in low amounts in retina, optic nerve, brain, and spinal cord and in very high amounts in eye lens.

In terms of biological role, vimentins are class-III intermediate filaments found in various non-epithelial cells, especially mesenchymal cells. Vimentin is attached to the nucleus, endoplasmic reticulum, and mitochondria, either laterally or terminally. This Carassius auratus (Goldfish) protein is Vimentin beta.